Reading from the N-terminus, the 395-residue chain is GPI-anchor transamidase (395 aa).

Positions 1-27 (MAVTDSLSRAATVLATVLLLSFGSVAA) are cleaved as a signal peptide. Residues 28 to 368 (SHIEDQAEQF…PKLKDWHPPG (341 aa)) are Lumenal-facing. Ca(2+) is bound by residues Asp-79, Ile-82, Glu-118, and Asp-120. His-164 acts as the Proton donor in catalysis. Cys-206 serves as the catalytic Nucleophile; acyl-thioester intermediate. Positions 206, 232, and 234 each coordinate a protein. Positions 231 to 236 (DSLSHQ) are autoinhibitory loop. Residues Cys-275 and Cys-280 are joined by a disulfide bond. Residues 369–385 (GFILGLWALIIMVFFKT) form a helical membrane-spanning segment. Over 386–395 (YGIKHMKFIF) the chain is Cytoplasmic.

It belongs to the peptidase C13 family. Heteropentamer. Part of the GPI-anchor transamidase complex, consisting of PIGK, PIGT, PIGS, PIGU and GAA1. Interacts with GPAA1. Interacts with PIGT; this interaction, via a disulfide link, stabilizes the expression of GAA1 and PIGK and links them to PIGS. The disulfide bond between PIGK/GPI8 and PIGT is important for normal enzyme activity.

It is found in the endoplasmic reticulum membrane. It functions in the pathway glycolipid biosynthesis; glycosylphosphatidylinositol-anchor biosynthesis. In the absence of proproteins substrates, exists in an inactive state with a disrupted catalytic site by an autoinhibitory loop. The binding of proprotein substrates, particularly the CSP region, to GPI-T triggers concerted conformational changes that alleviate the inhibition by the autoinhibitory loop. Meanwhile, proprotein residues near the omega- site induce the formation of a catalytic cleft for catalysis, following which the products are released and GPI-T reverts to the inactive state. In terms of biological role, catalytic subunit of the glycosylphosphatidylinositol-anchor (GPI-anchor) transamidase (GPI-T) complex that catalyzes the formation of the linkage between a proprotein and a GPI-anchor and participates in GPI anchored protein biosynthesis. Recognizes diverse proproteins at a C-terminal signal peptide (CSP) region that lacks consensus sequence and replaces it with a GPI-anchor via a transamidation reaction. Transamidation catalysis reaction follows a two-phase mechanism. In the acyl-enzyme phase, the carbonyl group of the proproteins's omega-site undergoes a nucleophilic attack forming an enzyme-substrate thioester bond. Followed by a general acid catalysis that allows CSP releasing, regenerating the carbonyl, and forming the acyl-enzyme intermediate. In the GPI-anchor attachment phase, the amino group of the GPI-anchor's ethanolamine phosphate, the one on third mannose (EtNP3), mediates a nucleophilic attack on the carbonyl of the acyl-enzyme intermediate, replacing the CSP, allowing GPI-anchor attachment to the omega-residue, therefore forming the product and freeing the enzyme. The protein is GPI-anchor transamidase of Homo sapiens (Human).